The sequence spans 378 residues: Protein RecA (378 aa).

Positions 1-20 (MAAKKDKSVPDSKITDKEGK) are disordered. 80 to 87 (GAESSGKT) contributes to the ATP binding site. A disordered region spans residues 344-378 (GPVDKKKKKSKKEASSDDTDDENLEIDDAIDENND). The span at 359 to 378 (SDDTDDENLEIDDAIDENND) shows a compositional bias: acidic residues.

This sequence belongs to the RecA family.

It is found in the cytoplasm. Can catalyze the hydrolysis of ATP in the presence of single-stranded DNA, the ATP-dependent uptake of single-stranded DNA by duplex DNA, and the ATP-dependent hybridization of homologous single-stranded DNAs. It interacts with LexA causing its activation and leading to its autocatalytic cleavage. The sequence is that of Protein RecA from Fusobacterium nucleatum subsp. nucleatum (strain ATCC 25586 / DSM 15643 / BCRC 10681 / CIP 101130 / JCM 8532 / KCTC 2640 / LMG 13131 / VPI 4355).